The chain runs to 286 residues: Phosphoribosylaminoimidazole-succinocarboxamide synthase (286 aa).

Belongs to the SAICAR synthetase family.

It carries out the reaction 5-amino-1-(5-phospho-D-ribosyl)imidazole-4-carboxylate + L-aspartate + ATP = (2S)-2-[5-amino-1-(5-phospho-beta-D-ribosyl)imidazole-4-carboxamido]succinate + ADP + phosphate + 2 H(+). It functions in the pathway purine metabolism; IMP biosynthesis via de novo pathway; 5-amino-1-(5-phospho-D-ribosyl)imidazole-4-carboxamide from 5-amino-1-(5-phospho-D-ribosyl)imidazole-4-carboxylate: step 1/2. This is Phosphoribosylaminoimidazole-succinocarboxamide synthase from Histophilus somni (strain 2336) (Haemophilus somnus).